Reading from the N-terminus, the 217-residue chain is MLEESSEPGWLSEEVKTGTTIIAIEFDGGVVLGSDSRVSAGETVVNRVMNKLSLLHDKIYCALSGSAADAQTIAEMVNYQLDVHSIEVGEDPQVRSAATLVKNISYKYKEELSAHLIVAGWDKRGGGQVYVTLNGLLSRQPFAVGGSGSAYVYGFVDAEYRKAMSKEDCQQFVVNTLSLAMSRDGSSGGVAYLVTIDEKGAEEKCILGNELPTFYDQ.

Positions 1 to 18 (MLEESSEPGWLSEEVKTG) are cleaved as a propeptide — removed in mature form. Catalysis depends on Thr-19, which acts as the Nucleophile.

This sequence belongs to the peptidase T1B family. In terms of assembly, the 26S proteasome consists of a 20S proteasome core and two 19S regulatory subunits. The 20S proteasome core is composed of 28 subunits that are arranged in four stacked rings, resulting in a barrel-shaped structure. The two end rings are each formed by seven alpha subunits, and the two central rings are each formed by seven beta subunits. The catalytic chamber with the active sites is on the inside of the barrel. Component of the immunoproteasome, where it displaces the equivalent housekeeping subunit PSMB6. Autocleaved. The resulting N-terminal Thr residue of the mature subunit is responsible for the nucleophile proteolytic activity.

The protein resides in the cytoplasm. It localises to the nucleus. The catalysed reaction is Cleavage of peptide bonds with very broad specificity.. In terms of biological role, the proteasome is a multicatalytic proteinase complex which is characterized by its ability to cleave peptides with Arg, Phe, Tyr, Leu, and Glu adjacent to the leaving group at neutral or slightly basic pH. The proteasome has an ATP-dependent proteolytic activity. This subunit is involved in antigen processing to generate class I binding peptides. The polypeptide is Proteasome subunit beta type-9 (psmb9-a) (Salmo salar (Atlantic salmon)).